The sequence spans 134 residues: MGMLTEFKEFAMRGNVIDLAVGVVIGAAFGKIVTALVEKIIMPPLGLLIGKVDFSQLAWTLSPARIGPDGKEIPAVVIGYGDFINTLIQFVIVAFAIFIVVKAINRLSRKQEAAPAAPAEEVVLLREIRDSLKK.

2 helical membrane-spanning segments follow: residues 16–36 and 81–101; these read VIDL…VTAL and GDFI…FIVV.

Belongs to the MscL family. In terms of assembly, homopentamer.

It localises to the cell inner membrane. Functionally, channel that opens in response to stretch forces in the membrane lipid bilayer. May participate in the regulation of osmotic pressure changes within the cell. The sequence is that of Large-conductance mechanosensitive channel from Stenotrophomonas maltophilia (strain K279a).